The chain runs to 359 residues: Endosome-associated-trafficking regulator 1 (359 aa).

Residues serine 18 and serine 74 each carry the phosphoserine modification. The required for interaction with PTPN13 stretch occupies residues 100 to 125; sequence LLDEDEDEEDGWNGAYLPSAMEQTHS. The segment at 153 to 180 is disordered; the sequence is SLPPWTLSDSDSRISPTGSPSADFTAHG. Over residues 159–174 the composition is skewed to polar residues; the sequence is LSDSDSRISPTGSPSA. 2 positions are modified to phosphoserine: serine 167 and serine 171. A coiled-coil region spans residues 185 to 295; sequence DRHLRTLQIS…FKRENEALRS (111 aa).

It belongs to the ENTR1 family. In terms of assembly, found in a complex with ENTR1, PTPN13 and GIT1. Interacts with PTPN13 (via the FERM domain). Interacts (via N-terminus) with GIT1 (via N- and C-terminus); this interaction is direct. Interacts with NOD2. Interacts (via N-terminus) with IFT88. Interacts with VPS35. In terms of processing, phosphorylated.

It is found in the cytoplasm. It localises to the early endosome. Its subcellular location is the endosome. The protein localises to the recycling endosome. The protein resides in the midbody. It is found in the cytoskeleton. It localises to the microtubule organizing center. Its subcellular location is the centrosome. The protein localises to the cilium basal body. Endosome-associated protein that plays a role in membrane receptor sorting, cytokinesis and ciliogenesis. Involved in the endosome-to-plasma membrane trafficking and recycling of SNX27-retromer-dependent cargo proteins, such as GLUT1. Involved in the regulation of cytokinesis; the function may involve PTPN13 and GIT1. Plays a role in the formation of cilia. Involved in cargo protein localization, such as PKD2, at primary cilia. Involved in the presentation of the tumor necrosis factor (TNF) receptor TNFRSF1A on the cell surface, and hence in the modulation of the TNF-induced apoptosis. This chain is Endosome-associated-trafficking regulator 1, found in Bos taurus (Bovine).